We begin with the raw amino-acid sequence, 438 residues long: Aspartate--tRNA(Asp) ligase (438 aa).

Glu-170 lines the L-aspartate pocket. Positions 192-195 (QLYK) are aspartate. Arg-214 contributes to the L-aspartate binding site. ATP contacts are provided by residues 214–216 (RAE), 222–224 (RHL), and Glu-361. Residues Glu-361 and Ser-364 each coordinate Mg(2+). 2 residues coordinate L-aspartate: Ser-364 and Arg-368. 409 to 412 (GAER) is an ATP binding site.

The protein belongs to the class-II aminoacyl-tRNA synthetase family. Type 2 subfamily. Homodimer. It depends on Mg(2+) as a cofactor.

It localises to the cytoplasm. It catalyses the reaction tRNA(Asp) + L-aspartate + ATP = L-aspartyl-tRNA(Asp) + AMP + diphosphate. Its function is as follows. Catalyzes the attachment of L-aspartate to tRNA(Asp) in a two-step reaction: L-aspartate is first activated by ATP to form Asp-AMP and then transferred to the acceptor end of tRNA(Asp). Is specific for tRNA(Asp) since it aspartylates tRNA(Asn) 3 orders of magnitude less efficiently than tRNA(Asp). The polypeptide is Aspartate--tRNA(Asp) ligase (Thermococcus kodakarensis (strain ATCC BAA-918 / JCM 12380 / KOD1) (Pyrococcus kodakaraensis (strain KOD1))).